The chain runs to 338 residues: Anthocyanidin reductase ((2S)-flavan-3-ol-forming) (338 aa).

Residues 18–21 (TGFV), lysine 48, 87–90 (VATP), and tyrosine 168 each bind NADP(+).

Belongs to the NAD(P)-dependent epimerase/dehydratase family. Dihydroflavonol-4-reductase subfamily.

The enzyme catalyses a (2S,3R)-flavan-3-ol + 2 NADP(+) = an anthocyanidin with a 3-hydroxy group + 2 NADPH + 2 H(+). It carries out the reaction a (2S,3S)-flavan-3-ol + 2 NADP(+) = an anthocyanidin with a 3-hydroxy group + 2 NADPH + 2 H(+). It participates in secondary metabolite biosynthesis; flavonoid biosynthesis. In terms of biological role, produces the terminal flavan-3-ol monomers required for the formation of proanthocyanidins or condensed tannins in leaves and flowers, as well as in the skin and seeds of developing berries. Behaves as a reductase and as a C-3 epimerase. Catalyzes the double reduction of anthocyanidins, producing a mixture of (2S,3S)- and (2S,3R)-flavan-3-ols. The enzyme catalyzes sequential hydride transfers to C-2 and C-4, respectively and epimerization at C-3 is achieved by tautomerization that occurs between the two hydride transfers. Converts cyanidin, pelargonidin and delphinidin into catechin and epicatechin, afzelechin and epiafzelechin, and gallocatechin and epigallocatechin respectively. In Vitis vinifera (Grape), this protein is Anthocyanidin reductase ((2S)-flavan-3-ol-forming).